A 469-amino-acid chain; its full sequence is Glutamate--tRNA ligase (469 aa).

Positions 11 to 21 (PSPTGFIHLGN) match the 'HIGH' region motif. Residues 243-247 (KMSKR) carry the 'KMSKS' region motif. Lysine 246 is an ATP binding site.

Belongs to the class-I aminoacyl-tRNA synthetase family. Glutamate--tRNA ligase type 1 subfamily. As to quaternary structure, monomer.

The protein localises to the cytoplasm. The catalysed reaction is tRNA(Glu) + L-glutamate + ATP = L-glutamyl-tRNA(Glu) + AMP + diphosphate. Its function is as follows. Catalyzes the attachment of glutamate to tRNA(Glu) in a two-step reaction: glutamate is first activated by ATP to form Glu-AMP and then transferred to the acceptor end of tRNA(Glu). The protein is Glutamate--tRNA ligase of Burkholderia orbicola (strain AU 1054).